The following is a 266-amino-acid chain: Heat-inducible transcription repressor HrcA (266 aa).

The protein belongs to the HrcA family.

In terms of biological role, negative regulator of class I heat shock genes (grpE-dnaK-dnaJ and groELS operons). Prevents heat-shock induction of these operons. The sequence is that of Heat-inducible transcription repressor HrcA from Helicobacter pylori (strain ATCC 700392 / 26695) (Campylobacter pylori).